The chain runs to 2837 residues: MNVSAYLPTCLPTYLPTCLPTYLPTYLPTYLPICLSEENNGIGIIGIGFRLPGGGSGKSLGNPSELWKELVNGYDGIIETNERWSDNFNKLGEINNRYGGLLPMDEVKSFDPLFFGISPPEATAIDPQQRLLLKCTWEAIEDAMIDPINLRGSNTSVFIGNTTHEYRDLNRTIDSIQTNIFSSSSHSSSNRVSNIFDFHGPSITIDTACSSSSNAVVLGCKSIIEGNSKMSIVGGTSLIFDANTPKSFSYMNMLSKDGRCKSFDANADGYVKSECIGVLLLKDLNQAIIDGDRVYCVIKGTSSNVDGNGYSDKSNFYSPSAQSQAENIKMALSSGNINAKDVDYVEAHGTGTPVGDPIEVEGISSIFKDNHSKENPLLIGSFKSMIGHCEASSGIASLVKCCLMFKNRYFIPNLHFKTPNPLIKFNEWNLKVVVEPTPFPKKEITMAVNNFGVTGSNVCIILKDFNYNHNSSSDNNNTINLKQQQHQNNIEYLIPFSANSTKSLEQYQSLISNFNQETMEFNDFVKEQIMSKSNSLYQRSVILGSNWNDFKDNLISTNNNIKTIKTTSSNISIKSKNPIIIMVFCGQGSQYNTMALELYKNEPIFRKTMDMLDNKLSKYYGFSILEKLRSIPVDDMKSIHNPALAQPAICMVQISLFELYKHWGIKPTFIVGHSLGEVTAAYCSGMIDLETECYLIYHRSIAQSTTTGCGRMLSINISPEKFIEQFSSRYPDVEISCYNSPTSIVIGGKEDQLNKISEELKSKGEFTSMLGSLSSFHTSSQKAIKEYILSLDYKSKESEIPIFSTVTTNLFDYKTTPYSPKYTYENILKSVNFTQTIENLYKHIENNQLGTDIVFIELAPHPTLQFYLKQMIPKDSSYFGKGDSISIYSPLHKKKNDVKEIRQTISQLYCQNGYNINFKCQFENINRSIVPTHKLPLYQWDEKQFWKINSLYENYYLTGPPIDILGNSITDSPFVKSYQTFINIKRKPFQYLKGHVVKGKFYFPGCGYIDNLLKIYPSQDITISTLEFSTPFIFTDDSVNHCLQTNIYPTGKTEYKVLFHFKDQKKNEWIQSSFGNFQLFKHNGEKSLKIFNQKYNIKDLIEKRCNLTKLTKEDLYDHIKLKTGLTYSGMFQAVSMCYLGDNCSLSVVSLELPKHLPDQKSFFNSSILDCCLHGMIGLVDEHCQLVFDRIEGFNLYSSNIPSARDQHTNVYVYSSLNAKMGDSYFASIVVMLEDGTVLIEIDNAACTSLTPIQDSLKIEAPTNELYSTYLQSKDSLILPPQTFESLYQQEKGQNDILVGTIIKQSLVPFVNEKMVFRILDFSSGFADYNGTTFHSSNNVLEKFNQLLKEFPLCEIDIEYTFGSVPQSLTSSIKDKLSHINERVSILYRDYSINDPLLLEDNQLKPSQYDIVLINDLEKETNDIKATLYMIYNLMVPNGQLILINNDGNNLIEIKELLDQCNFKDTIISNDKKSIIQTRKPQLLSELSPNPNIDSYDQIIIYSNDDSEICNKFLKSLESTDDKILSIISTISKFNEFVEKQSITDKSVIYFIKTMEQLTLDNFKSITFEYIEINRKLLKLNSMCKHVLITSDSRKDNYLASSVIGAARYFDEFQQLQLFTLDFDKESIIEYTHNNNEKNLVSLIELLTDKKISIQKEYLIRNGKVYFERIKKEQNLRKKFKSESYQDLVENDLVAVLSPNLEYELKPMTKDLEPFEVQVEIKSFALNYKDYLTYIGSVPPEMVNHKTGDINDPEFGSDFSGVITRVSKNNCSEFKVGDQVYGTAYNTASSKSIIDSGSIYFKPNNLSHEQASTIPVVYSTSLHSIYNIGNLKNYESILIHSASGGVGLSSLNILKWKGHCSYIFLTVGSPEKEKYLRDTYGSLITGIYSTRDKSYVQKIKDKLKELGSDKTGVDLILNTLSSDYMDSNFNCLSKSGRIVDLSITHLNSNEYIDNKKFKFNYGYHNVELLFIAAPILKKLLKSISKAIENNELINNLPITQYSNVNIKNAFEYINQRKHIGKIVVNHDTDLVGNLIKEKINSTSNLDFTLLKSNYQININNLGKNIIVTGQSGIVFEIIKWIVKFAPLVENIIILSKSSMKWQLELLVNRNKHIKFHFKSVDVGDINSMGKAIDEVSNDIDNIDSIFHYAFHQITKNVEAINMDTLDISFGAKTIGAIILHDQSIKRGWKLKNFIIASSVTSSLGSESQCSYVCANNVLESFSQYRKSLGLPSICTSYGLIKSTGFVSRNENVSVMFENLGFNPLSINTILGSLDLQIQNQELSTNLIVSSFNFSNITKYNPQKNNFSKIDYQVSLEEKNKVNQLGHDGNQDNKNSVNQMFLEKVSEVLSIEISKINIDIKLSAYGADSLSIVQLKNWVDKELSGNIITIQQLQTNTISSSIKIITNSLDKKKEGKNKSSTVVNNTNEITTTTKTFEYWKNEAKLDETIIASSIKSDLIIDNKMDKVILLSGSTGFLGGYLLLNLVKMKNCSKIYCLTRSGHLSDQIDLMNKIIDNLKHHKLFEMFEQSELEKIFPVRGDLRKSKLGLSDKMYLEISNQVNLILSCGADINLNANYDEIKPTNVDSTKEFIKLSVSKGTNKPMIPIVNLSSFSIFFGQKLNDEIEFDEYQVGIPSLSNLNNLPGGYIQSKLICEHLLLEASSRGIPAMTIRLPSIFSNPHTGIGHSGDLLQLIIKSISVTKYFPIEPTSLFISPVTWVAQNIINLIFNEGCWSKTKINTLNIISLNGELQTTNEIFLMIKKNFNYKETTLINWKKMISESNDKTCIRLRTFHPLDFTPTKYHMSKEFKISKNTKSLLISFGSYDGWNITEQMVLNLLKQ.

Positions 39-464 constitute a Ketosynthase family 3 (KS3) domain; sequence NNGIGIIGIG…GSNVCIILKD (426 aa). Catalysis depends on for beta-ketoacyl synthase activity residues Cys209, His348, and His388. The tract at residues 664-697 is acyl/malonyl transferase; sequence GIKPTFIVGHSLGEVTAAYCSGMIDLETECYLIY. Ser674 (for acyl/malonyl transferase activity) is an active-site residue. The segment at 962-1084 is N-terminal hotdog fold; the sequence is IDILGNSITD…GNFQLFKHNG (123 aa). The PKS/mFAS DH domain occupies 962 to 1255; the sequence is IDILGNSITD…CTSLTPIQDS (294 aa). His995 acts as the Proton acceptor; for dehydratase activity in catalysis. A C-terminal hotdog fold region spans residues 1106-1255; sequence NLTKLTKEDL…CTSLTPIQDS (150 aa). The Proton donor; for dehydratase activity role is filled by Asp1169. The region spanning 2330–2407 is the Carrier domain; sequence DNKNSVNQMF…SSIKIITNSL (78 aa). An O-(pantetheine 4'-phosphoryl)serine modification is found at Ser2367. The chain crosses the membrane as a helical span at residues 2464-2484; the sequence is KVILLSGSTGFLGGYLLLNLV.

The cofactor is pantetheine 4'-phosphate.

It is found in the membrane. Its function is as follows. Probable polyketide synthase. The chain is Probable polyketide synthase 3 (pks3) from Dictyostelium discoideum (Social amoeba).